A 366-amino-acid polypeptide reads, in one-letter code: NADH-quinone oxidoreductase subunit D (366 aa).

This sequence belongs to the complex I 49 kDa subunit family. In terms of assembly, NDH-1 is composed of 14 different subunits. Subunits NuoB, C, D, E, F, and G constitute the peripheral sector of the complex.

It is found in the cell membrane. The catalysed reaction is a quinone + NADH + 5 H(+)(in) = a quinol + NAD(+) + 4 H(+)(out). Functionally, NDH-1 shuttles electrons from NADH, via FMN and iron-sulfur (Fe-S) centers, to quinones in the respiratory chain. The immediate electron acceptor for the enzyme in this species is believed to be a menaquinone. Couples the redox reaction to proton translocation (for every two electrons transferred, four hydrogen ions are translocated across the cytoplasmic membrane), and thus conserves the redox energy in a proton gradient. The chain is NADH-quinone oxidoreductase subunit D from Bacillus thuringiensis (strain Al Hakam).